A 60-amino-acid polypeptide reads, in one-letter code: Cytotoxin 5 (60 aa).

4 disulfide bridges follow: Cys-3/Cys-21, Cys-14/Cys-38, Cys-42/Cys-53, and Cys-54/Cys-59.

The protein belongs to the three-finger toxin family. Short-chain subfamily. Type IA cytotoxin sub-subfamily. As to quaternary structure, monomer in solution; Homodimer and oligomer in the presence of negatively charged lipids forming a pore with a size ranging between 20 and 30 Angstroms. As to expression, expressed by the venom gland.

Its subcellular location is the secreted. The protein localises to the target cell membrane. Its function is as follows. Shows cytolytic activity on many different cells by forming pore in lipid membranes. In vivo, increases heart rate or kills the animal by cardiac arrest. In addition, it binds to heparin with high affinity, interacts with Kv channel-interacting protein 1 (KCNIP1) in a calcium-independent manner, and binds to integrin alpha-V/beta-3 (ITGAV/ITGB3) with moderate affinity. This is Cytotoxin 5 from Naja haje haje (Egyptian cobra).